The primary structure comprises 251 residues: Probable-ribose 5-phosphate isomerase (251 aa).

Belongs to the ribose 5-phosphate isomerase family.

It catalyses the reaction aldehydo-D-ribose 5-phosphate = D-ribulose 5-phosphate. It participates in carbohydrate degradation; pentose phosphate pathway; D-ribose 5-phosphate from D-ribulose 5-phosphate (non-oxidative stage): step 1/1. This is Probable-ribose 5-phosphate isomerase (rpia-1) from Caenorhabditis elegans.